We begin with the raw amino-acid sequence, 33 residues long: Brevinin-2Rh (33 aa).

The cysteines at positions 27 and 33 are disulfide-linked.

Expressed by the skin glands.

The protein resides in the secreted. In terms of biological role, antimicrobial peptide. This is Brevinin-2Rh from Pelophylax ridibundus (Marsh frog).